Consider the following 859-residue polypeptide: Bifunctional uridylyltransferase/uridylyl-removing enzyme (859 aa).

The tract at residues 1 to 325 (MSAHAAPSPE…PATSGITRVL (325 aa)) is uridylyltransferase. The interval 326 to 682 (SHDRFVEKQG…ARPSPIGDAL (357 aa)) is uridylyl-removing. Positions 444-566 (VDQHILMVLR…VGNERYLTAL (123 aa)) constitute an HD domain. 2 consecutive ACT domains span residues 683 to 762 (QVLV…PEPS) and 791 to 859 (ILSV…AIAV).

It belongs to the GlnD family. The cofactor is Mg(2+).

It carries out the reaction [protein-PII]-L-tyrosine + UTP = [protein-PII]-uridylyl-L-tyrosine + diphosphate. The enzyme catalyses [protein-PII]-uridylyl-L-tyrosine + H2O = [protein-PII]-L-tyrosine + UMP + H(+). Its activity is regulated as follows. Uridylyltransferase (UTase) activity is inhibited by glutamine, while glutamine activates uridylyl-removing (UR) activity. In terms of biological role, modifies, by uridylylation and deuridylylation, the PII regulatory proteins (GlnB and homologs), in response to the nitrogen status of the cell that GlnD senses through the glutamine level. Under low glutamine levels, catalyzes the conversion of the PII proteins and UTP to PII-UMP and PPi, while under higher glutamine levels, GlnD hydrolyzes PII-UMP to PII and UMP (deuridylylation). Thus, controls uridylylation state and activity of the PII proteins, and plays an important role in the regulation of nitrogen fixation and metabolism. The protein is Bifunctional uridylyltransferase/uridylyl-removing enzyme of Burkholderia vietnamiensis (strain G4 / LMG 22486) (Burkholderia cepacia (strain R1808)).